The following is a 317-amino-acid chain: uncharacterized protein (317 aa).

Helical transmembrane passes span 14–34, 72–92, 119–139, 196–216, 230–250, and 291–307; these read IPLLSNDLISMLSGGVAATVS, LIGFFRGNGTNCLRAFPYGAV, LLFGAIAGAASCATTYPLDIA, TLLNVVPYVSICFFTFEFCKQ, LFLGGFTGIIGQTLTFPADVL, and SNMLKIIPVMSITWYTY. Solcar repeat units follow at residues 18–103, 113–217, and 224–313; these read SNDL…LKQR, LENH…CKQK, and LTAF…VSKM.

This sequence belongs to the mitochondrial carrier (TC 2.A.29) family.

The protein resides in the mitochondrion inner membrane. This is an uncharacterized protein from Schizosaccharomyces pombe (strain 972 / ATCC 24843) (Fission yeast).